The sequence spans 145 residues: Small ribosomal subunit protein uS12 (145 aa).

Belongs to the universal ribosomal protein uS12 family. Component of the small ribosomal subunit. Mature ribosomes consist of a small (40S) and a large (60S) subunit. The 40S subunit contains about 32 different proteins and 1 molecule of RNA (18S). The 60S subunit contains 45 different proteins and 3 molecules of RNA (25S, 5.8S and 5S).

The protein resides in the cytoplasm. Its function is as follows. Component of the ribosome, a large ribonucleoprotein complex responsible for the synthesis of proteins in the cell. The small ribosomal subunit (SSU) binds messenger RNAs (mRNAs) and translates the encoded message by selecting cognate aminoacyl-transfer RNA (tRNA) molecules. The large subunit (LSU) contains the ribosomal catalytic site termed the peptidyl transferase center (PTC), which catalyzes the formation of peptide bonds, thereby polymerizing the amino acids delivered by tRNAs into a polypeptide chain. The nascent polypeptides leave the ribosome through a tunnel in the LSU and interact with protein factors that function in enzymatic processing, targeting, and the membrane insertion of nascent chains at the exit of the ribosomal tunnel. This Candida albicans (strain SC5314 / ATCC MYA-2876) (Yeast) protein is Small ribosomal subunit protein uS12 (RPS23A).